A 253-amino-acid chain; its full sequence is 5'/3'-nucleotidase SurE (253 aa).

A divalent metal cation contacts are provided by aspartate 8, aspartate 9, serine 39, and asparagine 92.

The protein belongs to the SurE nucleotidase family. A divalent metal cation is required as a cofactor.

The protein resides in the cytoplasm. The catalysed reaction is a ribonucleoside 5'-phosphate + H2O = a ribonucleoside + phosphate. The enzyme catalyses a ribonucleoside 3'-phosphate + H2O = a ribonucleoside + phosphate. It carries out the reaction [phosphate](n) + H2O = [phosphate](n-1) + phosphate + H(+). Its function is as follows. Nucleotidase with a broad substrate specificity as it can dephosphorylate various ribo- and deoxyribonucleoside 5'-monophosphates and ribonucleoside 3'-monophosphates with highest affinity to 3'-AMP. Also hydrolyzes polyphosphate (exopolyphosphatase activity) with the preference for short-chain-length substrates (P20-25). Might be involved in the regulation of dNTP and NTP pools, and in the turnover of 3'-mononucleotides produced by numerous intracellular RNases (T1, T2, and F) during the degradation of various RNAs. This chain is 5'/3'-nucleotidase SurE, found in Salmonella arizonae (strain ATCC BAA-731 / CDC346-86 / RSK2980).